The sequence spans 213 residues: MFRPYSLEEGTFLVRLARAVVEKYLTTGRIEVPESVFPKLLSDNYGVFTTIESIHGDKYELRGCIGYPEGYRNTLYATVFSAIGACCQDPRFPALRREELASVIFEVSILSPLNLLEVDPRKYPEIIEVGRHGLVVKRGPYSGLLLPQVPVEECWSPEEFLMHTCIKAWLPGDCWLDKKTKLYIYEAQIFREKSPGGEVYERDLVSEFARCQR.

An AMMECR1 domain is found at 8 to 201 (EEGTFLVRLA…EKSPGGEVYE (194 aa)).

In Pyrobaculum aerophilum (strain ATCC 51768 / DSM 7523 / JCM 9630 / CIP 104966 / NBRC 100827 / IM2), this protein is Protein PAE0745.